The chain runs to 424 residues: Gamma-glutamyl phosphate reductase (424 aa).

It belongs to the gamma-glutamyl phosphate reductase family.

It is found in the cytoplasm. It catalyses the reaction L-glutamate 5-semialdehyde + phosphate + NADP(+) = L-glutamyl 5-phosphate + NADPH + H(+). It functions in the pathway amino-acid biosynthesis; L-proline biosynthesis; L-glutamate 5-semialdehyde from L-glutamate: step 2/2. Its function is as follows. Catalyzes the NADPH-dependent reduction of L-glutamate 5-phosphate into L-glutamate 5-semialdehyde and phosphate. The product spontaneously undergoes cyclization to form 1-pyrroline-5-carboxylate. The sequence is that of Gamma-glutamyl phosphate reductase from Parvibaculum lavamentivorans (strain DS-1 / DSM 13023 / NCIMB 13966).